We begin with the raw amino-acid sequence, 416 residues long: Exodeoxyribonuclease 7 large subunit (416 aa).

Belongs to the XseA family. In terms of assembly, heterooligomer composed of large and small subunits.

Its subcellular location is the cytoplasm. The enzyme catalyses Exonucleolytic cleavage in either 5'- to 3'- or 3'- to 5'-direction to yield nucleoside 5'-phosphates.. Bidirectionally degrades single-stranded DNA into large acid-insoluble oligonucleotides, which are then degraded further into small acid-soluble oligonucleotides. The sequence is that of Exodeoxyribonuclease 7 large subunit from Acidothermus cellulolyticus (strain ATCC 43068 / DSM 8971 / 11B).